A 443-amino-acid chain; its full sequence is Exodeoxyribonuclease 7 large subunit (443 aa).

The protein belongs to the XseA family. As to quaternary structure, heterooligomer composed of large and small subunits.

It localises to the cytoplasm. The catalysed reaction is Exonucleolytic cleavage in either 5'- to 3'- or 3'- to 5'-direction to yield nucleoside 5'-phosphates.. Its function is as follows. Bidirectionally degrades single-stranded DNA into large acid-insoluble oligonucleotides, which are then degraded further into small acid-soluble oligonucleotides. The chain is Exodeoxyribonuclease 7 large subunit from Legionella pneumophila (strain Lens).